A 600-amino-acid chain; its full sequence is Elongation factor 4 (600 aa).

The region spanning Lys5 to Glu187 is the tr-type G domain. Residues Asp17–Thr22 and Asn134–Asp137 contribute to the GTP site.

Belongs to the TRAFAC class translation factor GTPase superfamily. Classic translation factor GTPase family. LepA subfamily.

It localises to the cell membrane. The enzyme catalyses GTP + H2O = GDP + phosphate + H(+). In terms of biological role, required for accurate and efficient protein synthesis under certain stress conditions. May act as a fidelity factor of the translation reaction, by catalyzing a one-codon backward translocation of tRNAs on improperly translocated ribosomes. Back-translocation proceeds from a post-translocation (POST) complex to a pre-translocation (PRE) complex, thus giving elongation factor G a second chance to translocate the tRNAs correctly. Binds to ribosomes in a GTP-dependent manner. The chain is Elongation factor 4 from Clostridium perfringens (strain ATCC 13124 / DSM 756 / JCM 1290 / NCIMB 6125 / NCTC 8237 / Type A).